A 321-amino-acid chain; its full sequence is Nodulation protein D 1 (321 aa).

Positions 6–63 constitute an HTH lysR-type domain; the sequence is LDLNLLVALDALMTERKLTAAARSINLSQPAMSAAITRLRTYFRDELFTMNGRELVPT. The H-T-H motif DNA-binding region spans 23–42; the sequence is LTAAARSINLSQPAMSAAIT.

This sequence belongs to the LysR transcriptional regulatory family.

NodD regulates the expression of the nodABCFE genes which encode other nodulation proteins. NodD is also a negative regulator of its own expression. Binds flavonoids as inducers. The chain is Nodulation protein D 1 (nodD1) from Bradyrhizobium japonicum.